A 367-amino-acid polypeptide reads, in one-letter code: MSLADSVLAINNDLPIRTDSPVHSGKVRSVYWLTDADSRRLITTKGYNVPEDTPLAIMVISDRISAFDCIFHGEGGLKGIPGKGAALNAISNHWFKLFAENGLADSHILDIPHPFVWIVQKARPIKVEAICRQYITGSMWRAYSKGERVFCGITLPEGLEKDQKLPELLITPSTKGILTGIPGVPAQDDVNISRSDIEANYQAFGFEKLEDIDLYEKLLKDGFKVISKALADIDQVFVDTKFEFGYVTDKDGNSKLIYMDEVGTPDSSRIWDGAAYRDGKILENSKEGFRQFLLNHFPDPDVLLNKDRMPEREALARDNDLPLEAMMQVSRTYTGVAEKVTGAPIPLPANPKADIIKILREEYDLIV.

Belongs to the SAICAR synthetase family.

It carries out the reaction 5-amino-1-(5-phospho-D-ribosyl)imidazole-4-carboxylate + L-aspartate + ATP = (2S)-2-[5-amino-1-(5-phospho-beta-D-ribosyl)imidazole-4-carboxamido]succinate + ADP + phosphate + 2 H(+). It functions in the pathway purine metabolism; IMP biosynthesis via de novo pathway; 5-amino-1-(5-phospho-D-ribosyl)imidazole-4-carboxamide from 5-amino-1-(5-phospho-D-ribosyl)imidazole-4-carboxylate: step 1/2. The protein is Phosphoribosylaminoimidazole-succinocarboxamide synthase of Shewanella baltica (strain OS185).